Here is a 1325-residue protein sequence, read N- to C-terminus: uncharacterized protein (1325 aa).

A signal peptide spans 1–18 (MNRIYRVIWNCTLQVFQA). The N-palmitoyl cysteine moiety is linked to residue cysteine 19. Cysteine 19 is lipidated: S-diacylglycerol cysteine.

To E.coli YfaL.

Its subcellular location is the cell membrane. This is an uncharacterized protein from Escherichia coli (strain K12).